A 674-amino-acid chain; its full sequence is Methionine--tRNA ligase (674 aa).

A 'HIGH' region motif is present at residues 11–21; it reads PYANGDLHLGH. Residues cysteine 142, cysteine 145, cysteine 155, and cysteine 158 each contribute to the Zn(2+) site. A 'KMSKS' region motif is present at residues 330–334; sequence KMSKS. Lysine 333 provides a ligand contact to ATP. Residues 574 to 674 enclose the tRNA-binding domain; that stretch reads DFMKVDLRIA…EGAQPGMRVK (101 aa).

Belongs to the class-I aminoacyl-tRNA synthetase family. MetG type 1 subfamily. As to quaternary structure, homodimer. It depends on Zn(2+) as a cofactor.

The protein localises to the cytoplasm. The enzyme catalyses tRNA(Met) + L-methionine + ATP = L-methionyl-tRNA(Met) + AMP + diphosphate. Is required not only for elongation of protein synthesis but also for the initiation of all mRNA translation through initiator tRNA(fMet) aminoacylation. This chain is Methionine--tRNA ligase, found in Francisella tularensis subsp. tularensis (strain FSC 198).